Here is a 265-residue protein sequence, read N- to C-terminus: Insulin-like growth factor-binding protein 2-B (265 aa).

An N-terminal signal peptide occupies residues 1 to 17 (MSLALLCSLLLVHGSLG). Positions 19–99 (IVFRCPSCTA…IQGLGRCENK (81 aa)) constitute an IGFBP N-terminal domain. Intrachain disulfides connect C23–C49, C26–C51, C34–C52, C41–C55, C63–C76, and C70–C96. Positions 107 to 122 (TNQESAAHSGEVNGTR) are enriched in polar residues. Disordered regions lie at residues 107-128 (TNQE…PMKK) and 144-170 (HHNN…SQCQ). The 83-residue stretch at 166 to 248 (QSQCQQELDK…SDKVRGDPNC (83 aa)) folds into the Thyroglobulin type-1 domain. Intrachain disulfides connect C169–C203, C214–C225, and C227–C248. The segment at 238–265 (SSDKVRGDPNCSQYYGGPELEPPTAQQK) is disordered. A Cell attachment site motif is present at residues 243–245 (RGD).

As to quaternary structure, interacts with igf2. Interacts with igf1. As to expression, in early embryos, expressed at a low level in most tissues with expression becoming abundant in the liver by 96 hours post-fertilization (hpf). The expression pattern in adults exhibits sexual dimorphism; in adult males expression is limited exclusively to the liver whereas in adult females expression is observed in the liver and other tissues including the gut, kidney, ovary and muscle.

It is found in the secreted. IGF-binding proteins prolong the half-life of the IGFs and have been shown to either inhibit or stimulate the growth promoting effects of the IGFs on cell culture. They alter the interaction of IGFs with their cell surface receptors. The polypeptide is Insulin-like growth factor-binding protein 2-B (Danio rerio (Zebrafish)).